The sequence spans 489 residues: Betaine aldehyde dehydrogenase (489 aa).

The K(+) site is built by T26 and D93. Residue G150–W152 coordinates NAD(+). K162 functions as the Charge relay system in the catalytic mechanism. Residue K176–E179 participates in NAD(+) binding. Residue V180 participates in K(+) binding. G229–T232 is a binding site for NAD(+). Residue L245 coordinates K(+). The active-site Proton acceptor is the E251. G253, C285, and E386 together coordinate NAD(+). C285 functions as the Nucleophile in the catalytic mechanism. C285 is modified (cysteine sulfenic acid (-SOH)). Positions 456 and 459 each coordinate K(+). E463 serves as the catalytic Charge relay system.

Belongs to the aldehyde dehydrogenase family. In terms of assembly, dimer of dimers. K(+) is required as a cofactor.

The enzyme catalyses betaine aldehyde + NAD(+) + H2O = glycine betaine + NADH + 2 H(+). Its pathway is amine and polyamine biosynthesis; betaine biosynthesis via choline pathway; betaine from betaine aldehyde: step 1/1. Involved in the biosynthesis of the osmoprotectant glycine betaine. Catalyzes the irreversible oxidation of betaine aldehyde to the corresponding acid. In Burkholderia mallei (strain SAVP1), this protein is Betaine aldehyde dehydrogenase.